A 554-amino-acid polypeptide reads, in one-letter code: MDKQNTDSEKRATAEAPPQSLCTLVSSSEQGGMDITNHNAKAGAADEYPHGVRLAAVVFSLMLGMFLVALDNTILGTAIPKITDEFHDLNKVSWYGSAYLMTFGCGFQSTWGKFYKYFPIKVWFLVAVFIFEVGSLICAVAQNPTTLIVGRAIAGFGGSGVGVGIFTIIGFAAPPENRPQLLGFTGATYGIAAVLGPLIGGAFTDKCFYINLPIGGVAAGTIFLLFKPPTSASPAKATPKEKFLQMDLVGATLMMGLIVSYILALQYGGQTHSWKSSEVIGLLVGFFLFVLAFVTWEIYQKERAMIVPRLFMRRYISVGSIYMFFFSGAYFIILYYLPIYFQSVYNSSPIGSGVKMLALIIPLTLAAIVQGWALSKIRIVPLFWIIGGALGTVGCGLFYTFDTETSVGKWVGYQIIVGFSTGWTFQIAMSNAQVHAPPEDMSQATAIVNFFMTVGGAFFISAAQCAFSNQLIKTITKNLPELDPTVAISTGATQIREAFTASQVPIVVDAYMVGLKAVFAITIAAFGVATVIGFFGSWKKLLADELEKATGGVA.

14 helical membrane passes run 54–74 (LAAV…DNTI), 93–115 (SWYG…GKFY), 120–140 (IKVW…ICAV), 152–172 (AIAG…IGFA), 181–201 (LLGF…LIGG), 206–226 (KCFY…FLLF), 248–268 (LVGA…LQYG), 279–299 (VIGL…WEIY), 321–341 (IYMF…PIYF), 349–369 (PIGS…AAIV), 379–399 (IVPL…GLFY), 410–430 (WVGY…IAMS), 447–467 (IVNF…QCAF), and 518–538 (VFAI…FGSW).

Belongs to the major facilitator superfamily.

The protein localises to the membrane. Its function is as follows. Probable efflux pump; part of the gene cluster that mediates the biosynthesis of griseofulvin. The chain is Probable efflux pump gsfJ from Penicillium aethiopicum.